We begin with the raw amino-acid sequence, 156 residues long: Small ribosomal subunit protein uS7 (156 aa).

Belongs to the universal ribosomal protein uS7 family. As to quaternary structure, part of the 30S ribosomal subunit. Contacts proteins S9 and S11.

Functionally, one of the primary rRNA binding proteins, it binds directly to 16S rRNA where it nucleates assembly of the head domain of the 30S subunit. Is located at the subunit interface close to the decoding center, probably blocks exit of the E-site tRNA. The polypeptide is Small ribosomal subunit protein uS7 (Brucella melitensis biotype 1 (strain ATCC 23456 / CCUG 17765 / NCTC 10094 / 16M)).